Here is a 508-residue protein sequence, read N- to C-terminus: Probable polyol transporter 3 (508 aa).

Transmembrane regions (helical) follow at residues 21 to 41 (FAFGCAIVASIISIIFGYDTG), 60 to 80 (QIEVLAGILNLCALVGSLTAG), 90 to 110 (YTIALSAVIFLVGSVLMGYGP), 120 to 140 (CIAGVGVGFALMIAPVYSAEI), 147 to 167 (GFLTSLPELCISLGILLGYVS), 178 to 198 (LGWRLMLGIAAFPSLILAFGI), 280 to 300 (ILIAAVGIHFFEHATGIEAVV), 318 to 338 (LLLATVGVGLTKAFFIIIATF), 348 to 368 (LLLTSTGGMVFALTSLAVSLT), 384 to 404 (IVSTYAFVAFFSIGLGPITWV), 418 to 438 (GASIGVAVNRIMNATVSMSFL), and 448 to 468 (GVFFVFAGIAVAAWWFFFFML).

It belongs to the major facilitator superfamily. Sugar transporter (TC 2.A.1.1) family.

It localises to the membrane. Its function is as follows. Plasma membrane sugar-proton symporter. This chain is Probable polyol transporter 3 (PLT3), found in Arabidopsis thaliana (Mouse-ear cress).